A 299-amino-acid polypeptide reads, in one-letter code: ATP phosphoribosyltransferase (299 aa).

It belongs to the ATP phosphoribosyltransferase family. Long subfamily. As to quaternary structure, equilibrium between an active dimeric form, an inactive hexameric form and higher aggregates. Interconversion between the various forms is largely reversible and is influenced by the natural substrates and inhibitors of the enzyme. It depends on Mg(2+) as a cofactor.

The protein localises to the cytoplasm. It catalyses the reaction 1-(5-phospho-beta-D-ribosyl)-ATP + diphosphate = 5-phospho-alpha-D-ribose 1-diphosphate + ATP. The protein operates within amino-acid biosynthesis; L-histidine biosynthesis; L-histidine from 5-phospho-alpha-D-ribose 1-diphosphate: step 1/9. With respect to regulation, feedback inhibited by histidine. Functionally, catalyzes the condensation of ATP and 5-phosphoribose 1-diphosphate to form N'-(5'-phosphoribosyl)-ATP (PR-ATP). Has a crucial role in the pathway because the rate of histidine biosynthesis seems to be controlled primarily by regulation of HisG enzymatic activity. The sequence is that of ATP phosphoribosyltransferase from Escherichia coli O157:H7.